The primary structure comprises 118 residues: Ribosome-binding factor A (118 aa).

The protein belongs to the RbfA family. Monomer. Binds 30S ribosomal subunits, but not 50S ribosomal subunits or 70S ribosomes.

Its subcellular location is the cytoplasm. Functionally, one of several proteins that assist in the late maturation steps of the functional core of the 30S ribosomal subunit. Associates with free 30S ribosomal subunits (but not with 30S subunits that are part of 70S ribosomes or polysomes). Required for efficient processing of 16S rRNA. May interact with the 5'-terminal helix region of 16S rRNA. In Bacillus cereus (strain AH820), this protein is Ribosome-binding factor A.